The following is a 520-amino-acid chain: Keratin, type II cytoskeletal 78 (520 aa).

The head stretch occupies residues Met1–Gln110. The coil 1A stretch occupies residues Glu111–Leu146. The IF rod domain occupies Glu111–Met424. A linker 1 region spans residues Gln147–Cys165. The tract at residues Leu166–Gln258 is coil 1B. The linker 12 stretch occupies residues Thr259 to Ile281. Residues Ile282–Glu421 form a coil 2 region. Residues Cys422–Tyr520 are tail.

The protein belongs to the intermediate filament family. In terms of assembly, heterotetramer of two type I and two type II keratins. As to expression, in non-keratinising esophageal and vaginal epithelium, strongly expressed in the basal and parabasal/lower suprabasal cell layers with considerably decreased expression in the mid/upper suprabasal layers (at protein level). A similar gradient from basal to lower suprabasal layers is seen in the partially keratinised dorsal tongue epithelium, in the scalp and in the plantar epidermis (at protein level). Extension of expression into the suprabasal compartments is distinctly more pronounced in non-keratinising epithelia than in keratinising epithelia and epidermis (at protein level). In scalp sections, present in the interfollicular epidermis and infundibulum including the entire outer root sheath of the hair follicles and also in the sebocytes (at protein level). In sweat glands, expressed in peripheral and luminal cells of the lower duct and in peripheral cells of the middle/upper duct with no expression observed in luminal cells (at protein level). In embryos at the 14th week of pregnancy, detected in basal and parabasal layers but is absent from the uppermost epidermal layer (at protein level). Expressed in tongue epithelium.

This Homo sapiens (Human) protein is Keratin, type II cytoskeletal 78 (KRT78).